A 185-amino-acid chain; its full sequence is dTTP/UTP pyrophosphatase (185 aa).

The active-site Proton acceptor is the Asp-67.

This sequence belongs to the Maf family. YhdE subfamily. The cofactor is a divalent metal cation.

It localises to the cytoplasm. It carries out the reaction dTTP + H2O = dTMP + diphosphate + H(+). The catalysed reaction is UTP + H2O = UMP + diphosphate + H(+). Functionally, nucleoside triphosphate pyrophosphatase that hydrolyzes dTTP and UTP. May have a dual role in cell division arrest and in preventing the incorporation of modified nucleotides into cellular nucleic acids. In Lacticaseibacillus casei (strain BL23) (Lactobacillus casei), this protein is dTTP/UTP pyrophosphatase.